A 78-amino-acid chain; its full sequence is DNA-directed RNA polymerase subunit Rpo5 (78 aa).

Belongs to the archaeal Rpo5/eukaryotic RPB5 RNA polymerase subunit family. Part of the RNA polymerase complex.

It localises to the cytoplasm. It catalyses the reaction RNA(n) + a ribonucleoside 5'-triphosphate = RNA(n+1) + diphosphate. In terms of biological role, DNA-dependent RNA polymerase (RNAP) catalyzes the transcription of DNA into RNA using the four ribonucleoside triphosphates as substrates. This chain is DNA-directed RNA polymerase subunit Rpo5, found in Methanosarcina acetivorans (strain ATCC 35395 / DSM 2834 / JCM 12185 / C2A).